Consider the following 297-residue polypeptide: Large ribosomal subunit protein uL18 (297 aa).

It belongs to the universal ribosomal protein uL18 family. In terms of assembly, component of the large ribosomal subunit (LSU).

The protein resides in the cytoplasm. The protein localises to the nucleus. Component of the ribosome, a large ribonucleoprotein complex responsible for the synthesis of proteins in the cell. The small ribosomal subunit (SSU) binds messenger RNAs (mRNAs) and translates the encoded message by selecting cognate aminoacyl-transfer RNA (tRNA) molecules. The large subunit (LSU) contains the ribosomal catalytic site termed the peptidyl transferase center (PTC), which catalyzes the formation of peptide bonds, thereby polymerizing the amino acids delivered by tRNAs into a polypeptide chain. The nascent polypeptides leave the ribosome through a tunnel in the LSU and interact with protein factors that function in enzymatic processing, targeting, and the membrane insertion of nascent chains at the exit of the ribosomal tunnel. The chain is Large ribosomal subunit protein uL18 (RpL5) from Aedes aegypti (Yellowfever mosquito).